The primary structure comprises 348 residues: Nicotinate-nucleotide--dimethylbenzimidazole phosphoribosyltransferase (348 aa).

Glu-316 functions as the Proton acceptor in the catalytic mechanism.

Belongs to the CobT family.

The catalysed reaction is 5,6-dimethylbenzimidazole + nicotinate beta-D-ribonucleotide = alpha-ribazole 5'-phosphate + nicotinate + H(+). It participates in nucleoside biosynthesis; alpha-ribazole biosynthesis; alpha-ribazole from 5,6-dimethylbenzimidazole: step 1/2. Catalyzes the synthesis of alpha-ribazole-5'-phosphate from nicotinate mononucleotide (NAMN) and 5,6-dimethylbenzimidazole (DMB). This Xanthomonas euvesicatoria pv. vesicatoria (strain 85-10) (Xanthomonas campestris pv. vesicatoria) protein is Nicotinate-nucleotide--dimethylbenzimidazole phosphoribosyltransferase.